The following is an 823-amino-acid chain: Valine--tRNA ligase (823 aa).

A 'HIGH' region motif is present at residues 52–62 (PTVSGVLHMGH). The 'KMSKS' region signature appears at 549-553 (KMSKS). Position 552 (Lys-552) interacts with ATP.

The protein belongs to the class-I aminoacyl-tRNA synthetase family. ValS type 2 subfamily. As to quaternary structure, monomer.

Its subcellular location is the cytoplasm. It catalyses the reaction tRNA(Val) + L-valine + ATP = L-valyl-tRNA(Val) + AMP + diphosphate. Its function is as follows. Catalyzes the attachment of valine to tRNA(Val). As ValRS can inadvertently accommodate and process structurally similar amino acids such as threonine, to avoid such errors, it has a 'posttransfer' editing activity that hydrolyzes mischarged Thr-tRNA(Val) in a tRNA-dependent manner. This is Valine--tRNA ligase from Anaplasma marginale (strain St. Maries).